Consider the following 592-residue polypeptide: A-type ATP synthase subunit A (592 aa).

234–241 (GGFGTGKT) contacts ATP.

The protein belongs to the ATPase alpha/beta chains family. As to quaternary structure, has multiple subunits with at least A(3), B(3), C, D, E, F, H, I and proteolipid K(x).

It is found in the cell membrane. The catalysed reaction is ATP + H2O + 4 H(+)(in) = ADP + phosphate + 5 H(+)(out). Functionally, component of the A-type ATP synthase that produces ATP from ADP in the presence of a proton gradient across the membrane. The A chain is the catalytic subunit. This chain is A-type ATP synthase subunit A, found in Cenarchaeum symbiosum (strain A).